Here is a 609-residue protein sequence, read N- to C-terminus: Putative pectinesterase/pectinesterase inhibitor 45 (609 aa).

The chain crosses the membrane as a helical span at residues 25–45 (IILGVVSVLVVAAAIIGGAFA). 10 N-linked (GlcNAc...) asparagine glycosylation sites follow: asparagine 51, asparagine 62, asparagine 100, asparagine 114, asparagine 183, asparagine 229, asparagine 296, asparagine 306, asparagine 346, and asparagine 362. A disordered region spans residues 54 to 87 (QEQGKTTNNKSKDSPTKSESPSPKPPSSAAQTVK). The interval 89-241 (GQVDKIIQTL…QVLTSNSLAM (153 aa)) is pectinesterase inhibitor 45. The segment at 296–593 (NATVAKDGSG…FTVGPFLQGE (298 aa)) is pectinesterase 45. Substrate-binding residues include threonine 371 and glutamine 401. The active-site Proton donor; for pectinesterase activity is aspartate 424. Cysteine 438 and cysteine 458 are oxidised to a cystine. The Nucleophile; for pectinesterase activity role is filled by aspartate 445. Asparagine 491 carries an N-linked (GlcNAc...) asparagine glycan. The substrate site is built by arginine 513 and tryptophan 515.

It in the N-terminal section; belongs to the PMEI family. This sequence in the C-terminal section; belongs to the pectinesterase family. Expressed in flower buds and pollen.

The protein resides in the membrane. It catalyses the reaction [(1-&gt;4)-alpha-D-galacturonosyl methyl ester](n) + n H2O = [(1-&gt;4)-alpha-D-galacturonosyl](n) + n methanol + n H(+). It functions in the pathway glycan metabolism; pectin degradation; 2-dehydro-3-deoxy-D-gluconate from pectin: step 1/5. In terms of biological role, acts in the modification of cell walls via demethylesterification of cell wall pectin. The protein is Putative pectinesterase/pectinesterase inhibitor 45 (PME45) of Arabidopsis thaliana (Mouse-ear cress).